The primary structure comprises 938 residues: MSDYKSTLNLPETGFPMRGDLAKREPGMLARWTDDDLYGIIRAAKKGKKTFILHDGPPYANGSIHIGHSVNKILKDIIIKSKGLSGYDSPYVPGWDCHGLPIELKVEQEYGKPGEKFTAAEFRAKCREYAATQVDGQRKDFIRLGVLGDWSHPYLTMDFKTEANIIRALGKIIGNGHLHKGAKPVHWCVDCRSALAEAEVEYYDKTSPSIDVAFQAVDQDALKTKFGVSNVNGPISLVIWTTTPWTLPANRAISIAPDFDYALVQIDGQAVILAKDLVESVMQRIGVSDYTILGTVKGAELELLRFTHPFMDFDVPAILGDHVTLDAGTGAVHTAPGHGPDDYVIGQKYGLETANPVGPDGTYLPGTYPTLDGVNVFKANDIVIALLQEKGALLHVEKMQHSYPCCWRHKTPIIFRATPQWFVSMDQKGLRAQSLKEIKGVQWIPDWGQARIESMVANRPDWCISRQRTWGVPMSLFVHKDTEELHPRTLELMEEVAKRVEVDGIQAWWDLDAKEILGDEADQYVKVPDTLDVWFDSGSTHSSVVDVRPEFAGHAADMYLEGSDQHRGWFMSSLMISTAMKGKAPYRQVLTHGFTVDGQGRKMSKSIGNTVSPQDVMNKLGADILRLWVASTDYTGEMAVSDEILKRAADSYRRIRNTARFLLANLNGFDPAKDMVKPEEMVVLDRWAVGCAKAAQEDILKAYEAYDFHEVVQRLMRFCSVEMGSFYLDIIKDRQYTAKADSVARRSCQTALYHIAEALVRWMAPILSFTADEVWGYLPGEREKYVFTGEWYEGLFGLADSEAMNDAFWDELLKVRGEVNKVIEQARADKKVGGSLEAAVTLYAEPVLAAKLTALGDELRFVLLTSGATVADYNDAPADAQQSEVLKGLKVALSKAEGEKCPRCWHYTQDVGKVAEHAEICGRCVSNVAGDGEKRKFA.

The 'HIGH' region signature appears at proline 58–histidine 68. Lysine 183 bears the N6-acetyllysine mark. An L-isoleucyl-5'-AMP-binding site is contributed by glutamate 561. Positions lysine 602 to serine 606 match the 'KMSKS' region motif. Lysine 605 lines the ATP pocket. Cysteine 901, cysteine 904, cysteine 921, and cysteine 924 together coordinate Zn(2+).

Belongs to the class-I aminoacyl-tRNA synthetase family. IleS type 1 subfamily. Monomer. Zn(2+) is required as a cofactor.

It localises to the cytoplasm. The enzyme catalyses tRNA(Ile) + L-isoleucine + ATP = L-isoleucyl-tRNA(Ile) + AMP + diphosphate. Functionally, catalyzes the attachment of isoleucine to tRNA(Ile). As IleRS can inadvertently accommodate and process structurally similar amino acids such as valine, to avoid such errors it has two additional distinct tRNA(Ile)-dependent editing activities. One activity is designated as 'pretransfer' editing and involves the hydrolysis of activated Val-AMP. The other activity is designated 'posttransfer' editing and involves deacylation of mischarged Val-tRNA(Ile). The chain is Isoleucine--tRNA ligase from Escherichia coli O127:H6 (strain E2348/69 / EPEC).